The chain runs to 521 residues: Cytochrome P450 1A1 (521 aa).

Residue phenylalanine 229 participates in substrate binding. Cysteine 463 contributes to the heme binding site.

The protein belongs to the cytochrome P450 family. Heme serves as cofactor.

Its subcellular location is the endoplasmic reticulum membrane. It is found in the microsome membrane. It catalyses the reaction an organic molecule + reduced [NADPH--hemoprotein reductase] + O2 = an alcohol + oxidized [NADPH--hemoprotein reductase] + H2O + H(+). Cytochromes P450 are a group of heme-thiolate monooxygenases. They oxidize a variety of structurally unrelated compounds, including steroids, fatty acids, and xenobiotics. The protein is Cytochrome P450 1A1 (cyp1a1) of Platichthys flesus (European flounder).